We begin with the raw amino-acid sequence, 680 residues long: Cytosolic endo-beta-N-acetylglucosaminidase 1 (680 aa).

The span at 1-15 (MSVAPPAPSPPPFDP) shows a compositional bias: pro residues. Residues 1-21 (MSVAPPAPSPPPFDPTKPSTP) form a disordered region.

Belongs to the glycosyl hydrolase 85 family.

The protein resides in the cytoplasm. The protein localises to the cytosol. It carries out the reaction an N(4)-(oligosaccharide-(1-&gt;3)-[oligosaccharide-(1-&gt;6)]-beta-D-Man-(1-&gt;4)-beta-D-GlcNAc-(1-&gt;4)-alpha-D-GlcNAc)-L-asparaginyl-[protein] + H2O = an oligosaccharide-(1-&gt;3)-[oligosaccharide-(1-&gt;6)]-beta-D-Man-(1-&gt;4)-D-GlcNAc + N(4)-(N-acetyl-beta-D-glucosaminyl)-L-asparaginyl-[protein]. In terms of biological role, endoglycosidase that releases N-glycans from glycoproteins by cleaving the beta-1,4-glycosidic bond in the N,N'-diacetylchitobiose core. Involved in the production of high-mannose type N-glycans during plant development and fruit maturation. The polypeptide is Cytosolic endo-beta-N-acetylglucosaminidase 1 (Arabidopsis thaliana (Mouse-ear cress)).